Consider the following 163-residue polypeptide: F-box protein At2g35280 (163 aa).

Positions 8 to 57 constitute an F-box domain; the sequence is ISRLEALPQDLLREIVAKIGVKSAEDYHNCILSCKELGASANDERVLKTL.

In Arabidopsis thaliana (Mouse-ear cress), this protein is F-box protein At2g35280.